Consider the following 420-residue polypeptide: Putative zinc metalloprotease Lmo1318 (420 aa).

Zn(2+) is bound at residue His18. The active site involves Glu19. His22 is a Zn(2+) binding site. 4 consecutive transmembrane segments (helical) span residues 172-194 (TIFA…LAFV), 304-326 (NWIV…LDML), 347-369 (VLNW…LPAL), and 393-412 (GIIH…LVTW). The 92-residue stretch at 176–267 (GPLFNFILAI…DGKTQDIDVK (92 aa)) folds into the PDZ domain.

Belongs to the peptidase M50B family. Requires Zn(2+) as cofactor.

It localises to the cell membrane. The protein is Putative zinc metalloprotease Lmo1318 of Listeria monocytogenes serovar 1/2a (strain ATCC BAA-679 / EGD-e).